Reading from the N-terminus, the 252-residue chain is uncharacterized protein (252 aa).

Residues 106-140 are a coiled coil; the sequence is IQSLHARRDHLDNAVEQLKSQLSRLDSSVAILKSQ.

This is an uncharacterized protein from Caenorhabditis elegans.